We begin with the raw amino-acid sequence, 449 residues long: Protein tweety homolog 1-A (449 aa).

Residues 1-43 lie on the Extracellular side of the membrane; it reads MSTSHGYRASWWTNILHQVPHTNFQFEVVDNQFAPQEWPYQQA. The helical transmembrane segment at 44 to 64 threads the bilayer; the sequence is LLFLASIAGLCLAISLILICV. At 65–86 the chain is on the cytoplasmic side; the sequence is YLIRFCCCASQEDDDSKNHRVC. Residues 87–107 traverse the membrane as a helical segment; the sequence is CVTWSCVAAVIICCAGIGIGF. Over 108–212 the chain is Extracellular; it reads YGNSETNDGV…QVNFIEDYRW (105 aa). The N-linked (GlcNAc...) asparagine glycan is linked to Asn-128. A helical transmembrane segment spans residues 213-233; that stretch reads LAYILLLLLDLIICLFTLLGL. Topologically, residues 234-238 are cytoplasmic; it reads AKRIK. Residues 239–259 form a helical membrane-spanning segment; that stretch reads WLVIVMTVVSFFVLLLSWGSM. The Extracellular portion of the chain corresponds to 260-388; the sequence is GLEMATAVGL…LKGLCYDGME (129 aa). Disulfide bonds link Cys-273–Cys-383 and Cys-301–Cys-368. Residues Asn-282 and Asn-353 are each glycosylated (N-linked (GlcNAc...) asparagine). The chain crosses the membrane as a helical span at residues 389 to 409; that stretch reads GILFLLLFSFLSALSFTAAVC. At 410 to 449 the chain is on the cytoplasmic side; that stretch reads SLPRAWKRFQNRDLDYDDMDEDDPFNPQESKRFVQWQSSI.

The protein belongs to the tweety family. Homotetramer; disulfide-linked. Homodimer.

The protein resides in the cell membrane. It carries out the reaction chloride(in) = chloride(out). It catalyses the reaction L-glutamate(out) = L-glutamate(in). Its function is as follows. May act as a calcium-independent, swelling-dependent volume-regulated anion channel (VRAC-swell) which plays a pivotal role in the process of regulatory volume decrease (RVD) in the brain through the efflux of anions like chloride and organic osmolytes like glutamate. The chain is Protein tweety homolog 1-A (ttyh1-a) from Xenopus laevis (African clawed frog).